Reading from the N-terminus, the 224-residue chain is GTP-binding protein RHO3 (224 aa).

22–29 provides a ligand contact to GTP; it reads GDGACGKT. The Effector region signature appears at 44–52; sequence YEPTVFENY. GTP contacts are provided by residues 69–73 and 127–130; these read DTAGQ and LKCD. The disordered stretch occupies residues 205 to 224; the sequence is TPKGARDSAPEAESSSCTIM. Position 221 is a cysteine methyl ester (Cys221). Cys221 is lipidated: S-geranylgeranyl cysteine. Positions 222-224 are cleaved as a propeptide — removed in mature form; sequence TIM.

This sequence belongs to the small GTPase superfamily. Rho family.

The protein resides in the cell membrane. Its function is as follows. Involved in the regulation of actin polarization. Rho proteins are required for distinct steps during polarized hyphal growth of A.gossypii. This chain is GTP-binding protein RHO3 (RHO3), found in Eremothecium gossypii (strain ATCC 10895 / CBS 109.51 / FGSC 9923 / NRRL Y-1056) (Yeast).